A 515-amino-acid polypeptide reads, in one-letter code: Putative cytochrome P450 CYP13A2 (515 aa).

C460 provides a ligand contact to heme.

This sequence belongs to the cytochrome P450 family. The cofactor is heme.

Its function is as follows. Cytochromes P450 are a group of heme-thiolate monooxygenases. They oxidize a variety of structurally unrelated compounds, including steroids, fatty acids, and xenobiotics. In Caenorhabditis elegans, this protein is Putative cytochrome P450 CYP13A2 (cyp-13A2).